The primary structure comprises 533 residues: 2-isopropylmalate synthase (533 aa).

Residues 8 to 269 (ILIFDTTLRD…YFNPFLGRPA (262 aa)) form the Pyruvate carboxyltransferase domain. Mn(2+)-binding residues include aspartate 17, histidine 208, histidine 210, and asparagine 244. Positions 408 to 533 (RLERVQVSCG…REHPPVVASL (126 aa)) are regulatory domain.

Belongs to the alpha-IPM synthase/homocitrate synthase family. LeuA type 1 subfamily. As to quaternary structure, homodimer. Mn(2+) is required as a cofactor.

The protein localises to the cytoplasm. It carries out the reaction 3-methyl-2-oxobutanoate + acetyl-CoA + H2O = (2S)-2-isopropylmalate + CoA + H(+). The protein operates within amino-acid biosynthesis; L-leucine biosynthesis; L-leucine from 3-methyl-2-oxobutanoate: step 1/4. Its function is as follows. Catalyzes the condensation of the acetyl group of acetyl-CoA with 3-methyl-2-oxobutanoate (2-ketoisovalerate) to form 3-carboxy-3-hydroxy-4-methylpentanoate (2-isopropylmalate). The sequence is that of 2-isopropylmalate synthase from Synechocystis sp. (strain ATCC 27184 / PCC 6803 / Kazusa).